We begin with the raw amino-acid sequence, 427 residues long: Adenylosuccinate synthetase (427 aa).

GTP contacts are provided by residues 12 to 18 and 40 to 42; these read GDEGKGK and GHT. The active-site Proton acceptor is Asp-13. Mg(2+)-binding residues include Asp-13 and Gly-40. IMP contacts are provided by residues 13 to 16, 38 to 41, Thr-127, Arg-141, Gln-222, Thr-237, and Arg-301; these read DEGK and NAGH. Catalysis depends on His-41, which acts as the Proton donor. 297 to 303 contacts substrate; the sequence is VVTKRPR. Residues Arg-303, 329 to 331, and 411 to 413 contribute to the GTP site; these read SLD and AVG.

Belongs to the adenylosuccinate synthetase family. In terms of assembly, homodimer. Mg(2+) serves as cofactor.

Its subcellular location is the cytoplasm. The enzyme catalyses IMP + L-aspartate + GTP = N(6)-(1,2-dicarboxyethyl)-AMP + GDP + phosphate + 2 H(+). It participates in purine metabolism; AMP biosynthesis via de novo pathway; AMP from IMP: step 1/2. In terms of biological role, plays an important role in the de novo pathway of purine nucleotide biosynthesis. Catalyzes the first committed step in the biosynthesis of AMP from IMP. In Leuconostoc mesenteroides subsp. mesenteroides (strain ATCC 8293 / DSM 20343 / BCRC 11652 / CCM 1803 / JCM 6124 / NCDO 523 / NBRC 100496 / NCIMB 8023 / NCTC 12954 / NRRL B-1118 / 37Y), this protein is Adenylosuccinate synthetase.